A 209-amino-acid chain; its full sequence is Orotate phosphoribosyltransferase (209 aa).

Residues Arg-96, Lys-100, His-102, and Glu-122 to Ser-130 each bind 5-phospho-alpha-D-ribose 1-diphosphate. Orotate is bound at residue Ser-126.

This sequence belongs to the purine/pyrimidine phosphoribosyltransferase family. PyrE subfamily. Homodimer. Requires Mg(2+) as cofactor.

It catalyses the reaction orotidine 5'-phosphate + diphosphate = orotate + 5-phospho-alpha-D-ribose 1-diphosphate. Its pathway is pyrimidine metabolism; UMP biosynthesis via de novo pathway; UMP from orotate: step 1/2. Catalyzes the transfer of a ribosyl phosphate group from 5-phosphoribose 1-diphosphate to orotate, leading to the formation of orotidine monophosphate (OMP). This Streptococcus pyogenes serotype M2 (strain MGAS10270) protein is Orotate phosphoribosyltransferase.